Consider the following 392-residue polypeptide: MALTDFLVEELNGLKQAGLYRPLKELQSPQRPRSIIDGREVINLSSNNYLGLADDPRLKQAMIEATEAYGAGSGAVRTIIGTMTIHNQLEQKLAEFKHVEAAVVFQSGFTCNSGVIPVLVGEGDAVISDELNHASIIDGCRLSKAKIHRYKHADMDDLARVLKETDGQYRRRLIITDGVFSMDGDIAPLPDIVELAEKHGCMTYVDDAHSSGVLGKNGRGSVNHFGLDGRVTVQVGTLSKAVGVLGGYVAGPRALIELLWHKGRPFLFSTSHPPGVAAACLKAIEIMEQEPERIDRLWENTRYFKERLTELGFDTGKSETPITPVIVGDEVKAMQLSDRLLEEGVFAQGIAFPTVPRGKARVRTIVTAAHTKEDLDEALAAFAKVGRELGLI.

R21 is a substrate binding site. 108-109 is a pyridoxal 5'-phosphate binding site; it reads GF. H133 provides a ligand contact to substrate. Pyridoxal 5'-phosphate contacts are provided by residues S181, 206-209, and 237-240; these read DDAH and TLSK. K240 is subject to N6-(pyridoxal phosphate)lysine. Substrate is bound at residue T354.

The protein belongs to the class-II pyridoxal-phosphate-dependent aminotransferase family. BioF subfamily. Homodimer. Pyridoxal 5'-phosphate is required as a cofactor.

It catalyses the reaction 6-carboxyhexanoyl-[ACP] + L-alanine + H(+) = (8S)-8-amino-7-oxononanoate + holo-[ACP] + CO2. It functions in the pathway cofactor biosynthesis; biotin biosynthesis. Functionally, catalyzes the decarboxylative condensation of pimeloyl-[acyl-carrier protein] and L-alanine to produce 8-amino-7-oxononanoate (AON), [acyl-carrier protein], and carbon dioxide. In Symbiobacterium thermophilum (strain DSM 24528 / JCM 14929 / IAM 14863 / T), this protein is 8-amino-7-oxononanoate synthase.